The chain runs to 280 residues: 3-methyl-2-oxobutanoate hydroxymethyltransferase (280 aa).

Residues aspartate 49 and aspartate 88 each contribute to the Mg(2+) site. 3-methyl-2-oxobutanoate contacts are provided by residues 49–50, aspartate 88, and lysine 118; that span reads DS. Mg(2+) is bound at residue glutamate 120. Residue glutamate 186 is the Proton acceptor of the active site.

Belongs to the PanB family. In terms of assembly, homodecamer; pentamer of dimers. The cofactor is Mg(2+).

It localises to the cytoplasm. The enzyme catalyses 3-methyl-2-oxobutanoate + (6R)-5,10-methylene-5,6,7,8-tetrahydrofolate + H2O = 2-dehydropantoate + (6S)-5,6,7,8-tetrahydrofolate. Its pathway is cofactor biosynthesis; (R)-pantothenate biosynthesis; (R)-pantoate from 3-methyl-2-oxobutanoate: step 1/2. Catalyzes the reversible reaction in which hydroxymethyl group from 5,10-methylenetetrahydrofolate is transferred onto alpha-ketoisovalerate to form ketopantoate. In Ruegeria sp. (strain TM1040) (Silicibacter sp.), this protein is 3-methyl-2-oxobutanoate hydroxymethyltransferase.